A 744-amino-acid chain; its full sequence is Protein zyg-11 homolog B (744 aa).

3 LRR repeats span residues Leu185–Lys208, Met216–Leu236, and Lys237–Gln261.

The protein belongs to the zyg-11 family. In terms of assembly, interacts with ELOC/Elongin C. Part of an E3 ubiquitin ligase complex including ZYG11B, CUL2 and Elongin BC.

In terms of biological role, serves as substrate adapter subunit in the E3 ubiquitin ligase complex ZYG11B-CUL2-Elongin BC. Acts redudantly with ZER1 to target substrates bearing N-terminal glycine degrons for proteasomal degradation. Involved in the clearance of proteolytic fragments generated by caspase cleavage during apoptosis since N-terminal glycine degrons are strongly enriched at caspase cleavage sites. Also important in the quality control of protein N-myristoylation in which N-terminal glycine degrons are conditionally exposed after a failure of N-myristoylation. The sequence is that of Protein zyg-11 homolog B from Mus musculus (Mouse).